The primary structure comprises 520 residues: Ubiquitin carboxyl-terminal hydrolase 3 (520 aa).

An N-acetylmethionine modification is found at Met-1. Residues 1–121 (MECPHLSSSV…QKVREHLQNL (121 aa)) form a UBP-type zinc finger. The Zn(2+) site is built by Cys-3, His-5, Cys-29, Cys-32, Cys-41, Cys-44, Cys-49, His-56, His-60, His-82, Cys-95, and Cys-98. The USP domain occupies 159–511 (TGLRNLGNTC…KAYILFYVER (353 aa)). Cys-168 serves as the catalytic Nucleophile. His-471 (proton acceptor) is an active-site residue.

The protein belongs to the peptidase C19 family. USP3 subfamily. As to quaternary structure, interacts (via UBP-type domain) with H2A; the interaction is less efficient than with monoubiquitinated H2A.

Its subcellular location is the nucleus. The protein localises to the cytoplasm. The enzyme catalyses Thiol-dependent hydrolysis of ester, thioester, amide, peptide and isopeptide bonds formed by the C-terminal Gly of ubiquitin (a 76-residue protein attached to proteins as an intracellular targeting signal).. Functionally, deubiquitinase that plays a role in several cellular processes including transcriptional regulation, cell cycle progression or innate immunity. In response to DNA damage, deubiquitinates monoubiquitinated target proteins such as histone H2A and H2AX and thereby counteracts RNF168- and RNF8-mediated ubiquitination. In turn, participates in the recruitment of DNA damage repair factors to DNA break sites. Required for proper progression through S phase and subsequent mitotic entry. Acts as a positive regulator of TP53 by deubiquitinating and stabilizing it to promote normal cell proliferation and transformation. Participates in establishing tolerance innate immune memory through non-transcriptional feedback. Mechanistically, negatively regulates TLR-induced NF-kappa-B signaling by targeting and removing the 'Lys-63'-linked polyubiquitin chains on MYD88. Negatively regulates the activation of type I interferon signaling by mediating 'Lys-63'-linked polyubiquitin chains on RIGI and IFIH1. Also deubiquinates ASC/PYCARD, the central adapter mediating the assembly and activation of most inflammasomes, and thereby promotes inflammasome activation. The protein is Ubiquitin carboxyl-terminal hydrolase 3 (Usp3) of Mus musculus (Mouse).